The primary structure comprises 282 residues: NADPH-dependent 7-cyano-7-deazaguanine reductase (282 aa).

Residue Ile-88–Ser-90 participates in substrate binding. Ser-90–Lys-91 is an NADPH binding site. Cys-190 acts as the Thioimide intermediate in catalysis. The active-site Proton donor is the Asp-197. His-229–Glu-230 serves as a coordination point for substrate. Arg-258–Gly-259 contacts NADPH.

It belongs to the GTP cyclohydrolase I family. QueF type 2 subfamily. As to quaternary structure, homodimer.

It is found in the cytoplasm. The catalysed reaction is 7-aminomethyl-7-carbaguanine + 2 NADP(+) = 7-cyano-7-deazaguanine + 2 NADPH + 3 H(+). It functions in the pathway tRNA modification; tRNA-queuosine biosynthesis. In terms of biological role, catalyzes the NADPH-dependent reduction of 7-cyano-7-deazaguanine (preQ0) to 7-aminomethyl-7-deazaguanine (preQ1). This is NADPH-dependent 7-cyano-7-deazaguanine reductase from Escherichia coli O45:K1 (strain S88 / ExPEC).